Reading from the N-terminus, the 415-residue chain is Peptide chain release factor subunit 1-1 (415 aa).

The protein belongs to the eukaryotic release factor 1 family. As to quaternary structure, heterodimer of two subunits, one of which binds GTP.

It localises to the cytoplasm. Directs the termination of nascent peptide synthesis (translation) in response to the termination codons UAA, UAG and UGA. The sequence is that of Peptide chain release factor subunit 1-1 from Methanosarcina acetivorans (strain ATCC 35395 / DSM 2834 / JCM 12185 / C2A).